Reading from the N-terminus, the 288-residue chain is 2-hydroxy-6-oxononadienedioate/2-hydroxy-6-oxononatrienedioate hydrolase (288 aa).

Residues 38–273 (VVLLHGSGPG…DCGHWAQWEH (236 aa)) enclose the AB hydrolase-1 domain. The active-site Proton acceptor is His-267.

This sequence belongs to the AB hydrolase superfamily. MhpC family. Homodimer.

The catalysed reaction is (2Z,4E)-2-hydroxy-6-oxonona-2,4-dienedioate + H2O = (2Z)-2-hydroxypenta-2,4-dienoate + succinate + H(+). It catalyses the reaction (2Z,4E,7E)-2-hydroxy-6-oxonona-2,4,7-trienedioate + H2O = (2Z)-2-hydroxypenta-2,4-dienoate + fumarate + H(+). The protein operates within aromatic compound metabolism; 3-phenylpropanoate degradation. In terms of biological role, catalyzes the cleavage of the C5-C6 bond of 2-hydroxy-6-oxononadienedioate and 2-hydroxy-6-oxononatrienedioate, a dienol ring fission product of the bacterial meta-cleavage pathway for degradation of phenylpropionic acid. This Escherichia coli O139:H28 (strain E24377A / ETEC) protein is 2-hydroxy-6-oxononadienedioate/2-hydroxy-6-oxononatrienedioate hydrolase.